The sequence spans 389 residues: S-adenosylmethionine synthase (389 aa).

His-19 is a binding site for ATP. A Mg(2+)-binding site is contributed by Asp-21. Residue Glu-47 coordinates K(+). Glu-60 and Gln-103 together coordinate L-methionine. The flexible loop stretch occupies residues 103–113 (QSGDIAQGVDR). ATP is bound by residues 168–170 (DGK), 234–235 (RF), Asp-243, 249–250 (RK), Ala-266, and Lys-270. Asp-243 contacts L-methionine. Lys-274 is a binding site for L-methionine.

The protein belongs to the AdoMet synthase family. Homotetramer; dimer of dimers. The cofactor is Mg(2+). K(+) serves as cofactor.

It localises to the cytoplasm. It carries out the reaction L-methionine + ATP + H2O = S-adenosyl-L-methionine + phosphate + diphosphate. The protein operates within amino-acid biosynthesis; S-adenosyl-L-methionine biosynthesis; S-adenosyl-L-methionine from L-methionine: step 1/1. Catalyzes the formation of S-adenosylmethionine (AdoMet) from methionine and ATP. The overall synthetic reaction is composed of two sequential steps, AdoMet formation and the subsequent tripolyphosphate hydrolysis which occurs prior to release of AdoMet from the enzyme. The protein is S-adenosylmethionine synthase of Nitratidesulfovibrio vulgaris (strain DSM 19637 / Miyazaki F) (Desulfovibrio vulgaris).